We begin with the raw amino-acid sequence, 509 residues long: Ribonuclease Y (509 aa).

A helical transmembrane segment spans residues M1–A21. Residues T199–L259 enclose the KH domain. The HD domain occupies V325 to A418.

It belongs to the RNase Y family.

Its subcellular location is the cell membrane. Endoribonuclease that initiates mRNA decay. This Pseudothermotoga lettingae (strain ATCC BAA-301 / DSM 14385 / NBRC 107922 / TMO) (Thermotoga lettingae) protein is Ribonuclease Y.